The chain runs to 1453 residues: Clustered mitochondria protein homolog (1453 aa).

A compositionally biased stretch (polar residues) spans 78–101 (LSENGQENSPHNSDSGHETSSPDS). The disordered stretch occupies residues 78-110 (LSENGQENSPHNSDSGHETSSPDSPLTPIEEGA). Residues 439–690 (EDGIRAEDCT…RTFPPDVNYL (252 aa)) enclose the Clu domain. Positions 979-1015 (PLTPSNEEVSMPINSVKKSRSSKRRKQISSGGKENDD) are disordered. Residues 995-1005 (KKSRSSKRRKQ) are compositionally biased toward basic residues. TPR repeat units lie at residues 1235 to 1268 (AEID…HQIY) and 1277 to 1310 (ALIY…YSKT).

This sequence belongs to the CLU family.

It is found in the cytoplasm. Its function is as follows. mRNA-binding protein involved in proper cytoplasmic distribution of mitochondria. This is Clustered mitochondria protein homolog from Brugia malayi (Filarial nematode worm).